Consider the following 273-residue polypeptide: F-actin-capping protein subunit alpha (273 aa).

Belongs to the F-actin-capping protein alpha subunit family. As to quaternary structure, heterodimer of an alpha and a beta subunit.

It localises to the cytoplasm. The protein resides in the cytoskeleton. F-actin-capping proteins bind in a Ca(2+)-independent manner to the fast growing ends of actin filaments (barbed end) thereby blocking the exchange of subunits at these ends. Unlike other capping proteins (such as gelsolin and severin), these proteins do not sever actin filaments. The polypeptide is F-actin-capping protein subunit alpha (CAP1) (Gibberella zeae (strain ATCC MYA-4620 / CBS 123657 / FGSC 9075 / NRRL 31084 / PH-1) (Wheat head blight fungus)).